A 484-amino-acid polypeptide reads, in one-letter code: Glutamate--tRNA ligase (484 aa).

Positions proline 11 to asparagine 21 match the 'HIGH' region motif. The 'KMSKS' region signature appears at lysine 252 to arginine 256. Lysine 255 provides a ligand contact to ATP.

Belongs to the class-I aminoacyl-tRNA synthetase family. Glutamate--tRNA ligase type 1 subfamily. In terms of assembly, monomer.

It is found in the cytoplasm. The enzyme catalyses tRNA(Glu) + L-glutamate + ATP = L-glutamyl-tRNA(Glu) + AMP + diphosphate. In terms of biological role, catalyzes the attachment of glutamate to tRNA(Glu) in a two-step reaction: glutamate is first activated by ATP to form Glu-AMP and then transferred to the acceptor end of tRNA(Glu). The sequence is that of Glutamate--tRNA ligase from Staphylococcus saprophyticus subsp. saprophyticus (strain ATCC 15305 / DSM 20229 / NCIMB 8711 / NCTC 7292 / S-41).